A 157-amino-acid polypeptide reads, in one-letter code: Transcription elongation factor GreA (157 aa).

Positions 12-74 (LKKLEEELEY…TLEAMLKNAK (63 aa)) form a coiled coil.

The protein belongs to the GreA/GreB family.

In terms of biological role, necessary for efficient RNA polymerase transcription elongation past template-encoded arresting sites. The arresting sites in DNA have the property of trapping a certain fraction of elongating RNA polymerases that pass through, resulting in locked ternary complexes. Cleavage of the nascent transcript by cleavage factors such as GreA or GreB allows the resumption of elongation from the new 3'terminus. GreA releases sequences of 2 to 3 nucleotides. This Thermoanaerobacter pseudethanolicus (strain ATCC 33223 / 39E) (Clostridium thermohydrosulfuricum) protein is Transcription elongation factor GreA.